We begin with the raw amino-acid sequence, 357 residues long: Carbamoyl phosphate synthase small chain (357 aa).

The interval 1–168 (MSKRLLILED…STATAYPSPN (168 aa)) is CPSase. The L-glutamine site is built by serine 46, glycine 220, and glycine 222. The region spanning 172–357 (KVVVVDFGLK…FMDLMDNFKK (186 aa)) is the Glutamine amidotransferase type-1 domain. Cysteine 247 functions as the Nucleophile in the catalytic mechanism. L-glutamine-binding residues include leucine 248, glutamine 251, asparagine 289, glycine 291, and tyrosine 292. Active-site residues include histidine 331 and aspartate 333.

It belongs to the CarA family. Composed of two chains; the small (or glutamine) chain promotes the hydrolysis of glutamine to ammonia, which is used by the large (or ammonia) chain to synthesize carbamoyl phosphate. Tetramer of heterodimers (alpha,beta)4.

It catalyses the reaction hydrogencarbonate + L-glutamine + 2 ATP + H2O = carbamoyl phosphate + L-glutamate + 2 ADP + phosphate + 2 H(+). It carries out the reaction L-glutamine + H2O = L-glutamate + NH4(+). The protein operates within amino-acid biosynthesis; L-arginine biosynthesis; carbamoyl phosphate from bicarbonate: step 1/1. Its pathway is pyrimidine metabolism; UMP biosynthesis via de novo pathway; (S)-dihydroorotate from bicarbonate: step 1/3. In terms of biological role, small subunit of the glutamine-dependent carbamoyl phosphate synthetase (CPSase). CPSase catalyzes the formation of carbamoyl phosphate from the ammonia moiety of glutamine, carbonate, and phosphate donated by ATP, constituting the first step of 2 biosynthetic pathways, one leading to arginine and/or urea and the other to pyrimidine nucleotides. The small subunit (glutamine amidotransferase) binds and cleaves glutamine to supply the large subunit with the substrate ammonia. The protein is Carbamoyl phosphate synthase small chain of Lactococcus lactis subsp. cremoris (strain MG1363).